Reading from the N-terminus, the 453-residue chain is Chromosomal replication initiator protein DnaA (453 aa).

Residues 1–74 (MKEKQFWNRI…GFEIYDAEIT (74 aa)) are domain I, interacts with DnaA modulators. The domain II stretch occupies residues 74–113 (TPHYIFTKPQDTTSSQVEEATNLTLYDYSPKLVSIPYSDT). Residues 114–331 (GLKEKYTFDN…GAINDITLIA (218 aa)) form a domain III, AAA+ region region. The ATP site is built by Gly158, Gly160, Lys161, and Thr162. The segment at 332–453 (RVKKIKDITI…EIESIKKKIK (122 aa)) is domain IV, binds dsDNA.

It belongs to the DnaA family. As to quaternary structure, oligomerizes as a right-handed, spiral filament on DNA at oriC.

It is found in the cytoplasm. In terms of biological role, plays an essential role in the initiation and regulation of chromosomal replication. ATP-DnaA binds to the origin of replication (oriC) to initiate formation of the DNA replication initiation complex once per cell cycle. Binds the DnaA box (a 9 base pair repeat at the origin) and separates the double-stranded (ds)DNA. Forms a right-handed helical filament on oriC DNA; dsDNA binds to the exterior of the filament while single-stranded (ss)DNA is stabiized in the filament's interior. The ATP-DnaA-oriC complex binds and stabilizes one strand of the AT-rich DNA unwinding element (DUE), permitting loading of DNA polymerase. After initiation quickly degrades to an ADP-DnaA complex that is not apt for DNA replication. Binds acidic phospholipids. The sequence is that of Chromosomal replication initiator protein DnaA from Streptococcus pneumoniae (strain Taiwan19F-14).